Reading from the N-terminus, the 232-residue chain is ATP-dependent Clp protease proteolytic subunit 2 (232 aa).

The Nucleophile role is filled by S124. H149 is an active-site residue.

Belongs to the peptidase S14 family. Fourteen ClpP subunits assemble into 2 heptameric rings which stack back to back to give a disk-like structure with a central cavity, resembling the structure of eukaryotic proteasomes.

The protein resides in the cytoplasm. It carries out the reaction Hydrolysis of proteins to small peptides in the presence of ATP and magnesium. alpha-casein is the usual test substrate. In the absence of ATP, only oligopeptides shorter than five residues are hydrolyzed (such as succinyl-Leu-Tyr-|-NHMec, and Leu-Tyr-Leu-|-Tyr-Trp, in which cleavage of the -Tyr-|-Leu- and -Tyr-|-Trp bonds also occurs).. Its function is as follows. Cleaves peptides in various proteins in a process that requires ATP hydrolysis. Has a chymotrypsin-like activity. Plays a major role in the degradation of misfolded proteins. This Nostoc sp. (strain PCC 7120 / SAG 25.82 / UTEX 2576) protein is ATP-dependent Clp protease proteolytic subunit 2.